Here is a 117-residue protein sequence, read N- to C-terminus: DNA-directed RNA polymerase subunit omega (117 aa).

The protein belongs to the RNA polymerase subunit omega family. In terms of assembly, the RNAP catalytic core consists of 2 alpha, 1 beta, 1 beta' and 1 omega subunit. When a sigma factor is associated with the core the holoenzyme is formed, which can initiate transcription.

The catalysed reaction is RNA(n) + a ribonucleoside 5'-triphosphate = RNA(n+1) + diphosphate. Promotes RNA polymerase assembly. Latches the N- and C-terminal regions of the beta' subunit thereby facilitating its interaction with the beta and alpha subunits. This chain is DNA-directed RNA polymerase subunit omega, found in Ruegeria sp. (strain TM1040) (Silicibacter sp.).